We begin with the raw amino-acid sequence, 103 residues long: Large ribosomal subunit protein bL21 (103 aa).

Belongs to the bacterial ribosomal protein bL21 family. In terms of assembly, part of the 50S ribosomal subunit. Contacts protein L20.

This protein binds to 23S rRNA in the presence of protein L20. In Actinobacillus pleuropneumoniae serotype 5b (strain L20), this protein is Large ribosomal subunit protein bL21.